Here is an 87-residue protein sequence, read N- to C-terminus: Ribonuclease P protein component 1 (87 aa).

This sequence belongs to the eukaryotic/archaeal RNase P protein component 1 family. As to quaternary structure, consists of a catalytic RNA component and at least 4-5 protein subunits.

The protein resides in the cytoplasm. The catalysed reaction is Endonucleolytic cleavage of RNA, removing 5'-extranucleotides from tRNA precursor.. Its function is as follows. Part of ribonuclease P, a protein complex that generates mature tRNA molecules by cleaving their 5'-ends. The protein is Ribonuclease P protein component 1 of Thermoplasma acidophilum (strain ATCC 25905 / DSM 1728 / JCM 9062 / NBRC 15155 / AMRC-C165).